The primary structure comprises 382 residues: Lipid-A-disaccharide synthase (382 aa).

Belongs to the LpxB family.

The catalysed reaction is 2-N,3-O-bis[(3R)-3-hydroxytetradecanoyl]-alpha-D-glucosaminyl 1-phosphate + UDP-2-N,3-O-bis[(3R)-3-hydroxytetradecanoyl]-alpha-D-glucosamine = lipid A disaccharide (E. coli) + UDP + H(+). It carries out the reaction a lipid X + a UDP-2-N,3-O-bis[(3R)-3-hydroxyacyl]-alpha-D-glucosamine = a lipid A disaccharide + UDP + H(+). It participates in glycolipid biosynthesis; lipid IV(A) biosynthesis; lipid IV(A) from (3R)-3-hydroxytetradecanoyl-[acyl-carrier-protein] and UDP-N-acetyl-alpha-D-glucosamine: step 5/6. Its function is as follows. Condensation of UDP-2,3-diacylglucosamine and 2,3-diacylglucosamine-1-phosphate to form lipid A disaccharide, a precursor of lipid A, a phosphorylated glycolipid that anchors the lipopolysaccharide to the outer membrane of the cell. The chain is Lipid-A-disaccharide synthase from Escherichia coli O7:K1 (strain IAI39 / ExPEC).